The sequence spans 807 residues: MLMPRRPRNPRTVRIRIRVRGVVQGVGFRPFVYRLARELGLAGWVRNDGAGVDIEAQGSAAALVELRERLRRDAPPLARVDEIGEERCAAQVDADGFAILESSRSDAAVHTAIGHDTAVCPDCLAELFDPANRRYRYAFINCTQCGPRYTLTWALPYDRATTSMAPFPQCRPCLDEYNAPEHRRFHAEPNACPDCGPSLALLNAQGMPVEDVDPIAETVARLQRGEIVAIKGLGGFHLACDAHNADAVARLRSRKQREEKPFAVMVANLATAAQWGDIGSGEAALLTASERPIVLLRKRSGVDGRFAGVAPGLVWLGVMLPYTPLQYLLFHEAAGRPEGLGWLAQPQSLVLVMTSANPGGEPLVTGNDEAAQRLTGIADAFLLHDREILVRCDDSVVRGDGEPAPHVQFIRRARGYTPRAIKLARSGPSVLALGGSFKNTVCLTRGDEAFVSQHVGDLGNAATCEALIEAVAHLQRVLEIRPQLVAHDLHPDFFSTRHAAELAAQWGVPAVAVQHHHAHIAAVLAEHGSDEPAIGLALDGVGLGDDGQAWGGELLLVDGGACKRLGHLRELPLPGGDRAAREPWRMAAAALHAMGRGEEIEGRFPRQPGAPMVNRMLAQRLNAPLSSSMGRWFDAAAGLLGTRETMAYEGQAAMLLEGLAESWGEQPSPGRPKTVAHSLGGVPRSGGGTYKALALPDAWRIDAGNTLDLLPLLEALSAETNAARGAAQFHATLVAALEAWTVATVQVTGVRTVVFGGGCFLNHILARNLCRRLAARGLTVLTARQLPPNDGGIALGQVWVALQRAPN.

An Acylphosphatase-like domain is found at 14-101; the sequence is RIRIRVRGVV…VDADGFAILE (88 aa). C4-type zinc fingers lie at residues 120-145 and 170-195; these read CPDCLAELFDPANRRYRYAFINCTQC and CRPCLDEYNAPEHRRFHAEPNACPDC. Residues 212 to 415 enclose the YrdC-like domain; the sequence is VDPIAETVAR…HVQFIRRARG (204 aa). The segment at 663-682 is disordered; sequence WGEQPSPGRPKTVAHSLGGV.

Belongs to the carbamoyltransferase HypF family.

The enzyme catalyses C-terminal L-cysteinyl-[HypE protein] + carbamoyl phosphate + ATP + H2O = C-terminal S-carboxamide-L-cysteinyl-[HypE protein] + AMP + phosphate + diphosphate + H(+). It functions in the pathway protein modification; [NiFe] hydrogenase maturation. In terms of biological role, involved in the maturation of [NiFe] hydrogenases. Along with HypE, it catalyzes the synthesis of the CN ligands of the active site iron of [NiFe]-hydrogenases. HypF functions as a carbamoyl transferase using carbamoylphosphate as a substrate and transferring the carboxamido moiety in an ATP-dependent reaction to the thiolate of the C-terminal cysteine of HypE yielding a protein-S-carboxamide. In Cupriavidus necator (strain ATCC 17699 / DSM 428 / KCTC 22496 / NCIMB 10442 / H16 / Stanier 337) (Ralstonia eutropha), this protein is Carbamoyltransferase HypF2 (hypF2).